The chain runs to 278 residues: Small ribosomal subunit protein uS9m (278 aa).

A mitochondrion-targeting transit peptide spans 1–10; it reads MFSRLSLFRR. Residues 259–278 are disordered; it reads VERKKPGKKKARKMPTWVKR.

This sequence belongs to the universal ribosomal protein uS9 family. In terms of assembly, component of the mitochondrial small ribosomal subunit (mt-SSU). Mature yeast 74S mitochondrial ribosomes consist of a small (37S) and a large (54S) subunit. The 37S small subunit contains a 15S ribosomal RNA (15S mt-rRNA) and 34 different proteins. The 54S large subunit contains a 21S rRNA (21S mt-rRNA) and 46 different proteins.

It localises to the mitochondrion. Component of the mitochondrial ribosome (mitoribosome), a dedicated translation machinery responsible for the synthesis of mitochondrial genome-encoded proteins, including at least some of the essential transmembrane subunits of the mitochondrial respiratory chain. The mitoribosomes are attached to the mitochondrial inner membrane and translation products are cotranslationally integrated into the membrane. The polypeptide is Small ribosomal subunit protein uS9m (MRPS9) (Saccharomyces cerevisiae (strain ATCC 204508 / S288c) (Baker's yeast)).